Consider the following 451-residue polypeptide: Tubulin alpha-2 chain (451 aa).

Q11 contacts GTP. At K40 the chain carries N6-acetyllysine. GTP contacts are provided by E71, S140, G144, T145, T179, N206, and N228. E71 provides a ligand contact to Mg(2+). E254 is a catalytic residue. The tract at residues 432–451 is disordered; it reads YEEVGIDTADGEDDEEANDY.

This sequence belongs to the tubulin family. Dimer of alpha and beta chains. A typical microtubule is a hollow water-filled tube with an outer diameter of 25 nm and an inner diameter of 15 nM. Alpha-beta heterodimers associate head-to-tail to form protofilaments running lengthwise along the microtubule wall with the beta-tubulin subunit facing the microtubule plus end conferring a structural polarity. Microtubules usually have 13 protofilaments but different protofilament numbers can be found in some organisms and specialized cells. Mg(2+) serves as cofactor. Post-translationally, undergoes a tyrosination/detyrosination cycle, the cyclic removal and re-addition of a C-terminal tyrosine residue by the enzymes tubulin tyrosine carboxypeptidase (TTCP) and tubulin tyrosine ligase (TTL), respectively. Acetylation of alpha chains at Lys-40 stabilizes microtubules and affects affinity and processivity of microtubule motors. This modification has a role in multiple cellular functions, ranging from cell motility, cell cycle progression or cell differentiation to intracellular trafficking and signaling.

It is found in the cytoplasm. The protein resides in the cytoskeleton. The catalysed reaction is GTP + H2O = GDP + phosphate + H(+). Its function is as follows. Tubulin is the major constituent of microtubules, a cylinder consisting of laterally associated linear protofilaments composed of alpha- and beta-tubulin heterodimers. Microtubules grow by the addition of GTP-tubulin dimers to the microtubule end, where a stabilizing cap forms. Below the cap, tubulin dimers are in GDP-bound state, owing to GTPase activity of alpha-tubulin. The polypeptide is Tubulin alpha-2 chain (Homarus americanus (American lobster)).